The sequence spans 35 residues: uncharacterized protein (35 aa).

A compositionally biased stretch (low complexity) spans 1-27 (MDQNEANIYNENNENNENNENENCQNE). Positions 1 to 35 (MDQNEANIYNENNENNENNENENCQNEPIRIKIII) are disordered.

This is an uncharacterized protein from Dictyostelium discoideum (Social amoeba).